The primary structure comprises 493 residues: Leucine-rich repeat-containing protein 14 (493 aa).

Residues 111 to 146 (KHALRVLDMTGLLDDGVEQDPETMSMWDCTAAVART) form an LRR 1; degenerate repeat. An LRR 2; degenerate repeat occupies 194-218 (RLCCRDLRAEDLPMRNTVALLQLLD). The stretch at 219–246 (AGCLRRIDLRFNNLGLRGLSVIIPHVAR) is one LRR 3; degenerate repeat. One copy of the LRR 4; degenerate repeat lies at 247–282 (FQHLASLRLHYVHGDSRQPSVDGEDNFRYFLAQMGR). LRR repeat units follow at residues 283–307 (FMCL…LSTL), 308–339 (QRPL…AHLK), 340–360 (KLDL…QGLL), 364–391 (ATTL…TLTR), and 392–416 (CASL…LLRD).

The protein belongs to the PRAME family. LRRC14 subfamily. As to quaternary structure, interacts with IKBKB; disrupts IKBKB-IKBKG interaction preventing I-kappa-B-kinase (IKK) core complex formation and leading to a decrease of IKBKB phosphorylation and NF-kappaB activation. Interacts with CHUK.

It localises to the cytoplasm. Its function is as follows. Negatively regulates Toll-like receptor-mediated NF-kappa-B signaling by disrupting IKK core complex formation through interaction with IKBKB. The chain is Leucine-rich repeat-containing protein 14 from Mus musculus (Mouse).